The sequence spans 185 residues: Ribosome-recycling factor (185 aa).

This sequence belongs to the RRF family.

Its subcellular location is the cytoplasm. Functionally, responsible for the release of ribosomes from messenger RNA at the termination of protein biosynthesis. May increase the efficiency of translation by recycling ribosomes from one round of translation to another. The polypeptide is Ribosome-recycling factor (Serratia proteamaculans (strain 568)).